The following is a 229-amino-acid chain: Ras-related protein Rab-33B (229 aa).

Residues Asn-43, Val-44, Gly-45, Lys-46, Thr-47, Cys-48, Thr-62, and Thr-65 each contribute to the GTP site. Thr-47 lines the Mg(2+) pocket. The short motif at Gly-56–Val-68 is the Switch 1 element. Mg(2+) contacts are provided by Thr-65 and Asp-88. The short motif at Thr-89–His-108 is the Switch 2 element. GTP is bound by residues Gly-91, Asn-148, Lys-149, Asp-151, Ala-179, and Lys-180. S-geranylgeranyl cysteine attachment occurs at residues Cys-227 and Cys-229. At Cys-229 the chain carries Cysteine methyl ester.

The protein belongs to the small GTPase superfamily. Rab family. As to quaternary structure, interacts (GTP- and GDP-bound forms) with ATG16L1; the complex consists of a tetramer where two RAB33B molecules bind independently one molecule of the ATG16L1 homodimer; the interaction promotes ATG12-ATG5-ATG16L1 complex recruitment to phagophores. Interacts with ATG16L2; however interaction is approximately hundred times lower than for ATG16L1. Interacts with RIC1 (via C-terminus domain); the interaction is direct with a preference for RAB33B-GTP. Interacts with RGP1. Requires Mg(2+) as cofactor. In terms of processing, prenylated.

The protein localises to the golgi apparatus membrane. The protein resides in the golgi apparatus. It localises to the cis-Golgi network. Its subcellular location is the preautophagosomal structure membrane. The catalysed reaction is GTP + H2O = GDP + phosphate + H(+). With respect to regulation, regulated by guanine nucleotide exchange factors (GEFs) which promote the exchange of bound GDP for free GTP. Regulated by GTPase activating proteins (GAPs) such as SGSM2 which increase the GTP hydrolysis activity. Inhibited by GDP dissociation inhibitors (GDIs). Its function is as follows. The small GTPases Rab are key regulators of intracellular membrane trafficking, from the formation of transport vesicles to their fusion with membranes. Rabs cycle between an inactive GDP-bound form and an active GTP-bound form that is able to recruit to membranes different sets of downstream effectors directly responsible for vesicle formation, movement, tethering and fusion. RAB33B acts, in coordination with RAB6A, to regulate intra-Golgi retrograde trafficking. Participates in autophagosome formation by recruiting the ATG12-ATG5-ATG16L1 complex to phagophores, probably in a nucleotide-independent manner. The sequence is that of Ras-related protein Rab-33B (RAB33B) from Pongo abelii (Sumatran orangutan).